Here is a 377-residue protein sequence, read N- to C-terminus: Interferon gamma receptor 1 (377 aa).

The signal sequence occupies residues 1 to 23; it reads MRTQIYISVTVLILLLKKSDLEA. At 24–235 the chain is on the extracellular side; it reads VRVPSPESVS…IRRYTPFTVY (212 aa). The region spanning 26–117 is the Fibronectin type-III domain; it reads VPSPESVSVQ…DFFIFSFNEN (92 aa). N-linked (GlcNAc...) asparagine glycosylation is found at Asn-78 and Asn-186. Residues 236–256 traverse the membrane as a helical segment; it reads LYPVLGVTLTLLFITGIIILL. Residues 257–377 are Cytoplasmic-facing; the sequence is EKKCNSEMKK…TVDSYGPRLL (121 aa). The interval 326-377 is disordered; the sequence is VYSEDKNSYGPNDLVEDEQSDLSDFYDCPHAPKQKREMSPGDTVDSYGPRLL.

This sequence belongs to the type II cytokine receptor family. As to expression, highly expressed in spleen. Also detected in brain, kidney, gill, intestine and heart. Expressed at very low levels in muscle. In immune cell populations, shows highest expression in monocytes, and slightly lower expression in peripheral blood leukocytes, splenocytes, neutrophils and mature macrophages.

The protein resides in the cell membrane. Functionally, receptor which shows binding specificity for the cytokine ifng1r (interferon gamma-related). This Carassius auratus (Goldfish) protein is Interferon gamma receptor 1.